The primary structure comprises 350 residues: S-adenosylmethionine:tRNA ribosyltransferase-isomerase (350 aa).

This sequence belongs to the QueA family. Monomer.

Its subcellular location is the cytoplasm. The enzyme catalyses 7-aminomethyl-7-carbaguanosine(34) in tRNA + S-adenosyl-L-methionine = epoxyqueuosine(34) in tRNA + adenine + L-methionine + 2 H(+). The protein operates within tRNA modification; tRNA-queuosine biosynthesis. In terms of biological role, transfers and isomerizes the ribose moiety from AdoMet to the 7-aminomethyl group of 7-deazaguanine (preQ1-tRNA) to give epoxyqueuosine (oQ-tRNA). The polypeptide is S-adenosylmethionine:tRNA ribosyltransferase-isomerase (Aliivibrio fischeri (strain MJ11) (Vibrio fischeri)).